We begin with the raw amino-acid sequence, 648 residues long: DNA ligase (648 aa).

NAD(+) contacts are provided by residues 30 to 34 (DEEYD), 79 to 80 (SM), and E108. K110 acts as the N6-AMP-lysine intermediate in catalysis. Residues R131, E165, K280, and K304 each coordinate NAD(+). Zn(2+) is bound by residues C398, C401, C414, and C419. The BRCT domain maps to 573-648 (AKENPFKGKI…LTEDEMRAML (76 aa)).

It belongs to the NAD-dependent DNA ligase family. LigA subfamily. Mg(2+) is required as a cofactor. Requires Mn(2+) as cofactor.

The catalysed reaction is NAD(+) + (deoxyribonucleotide)n-3'-hydroxyl + 5'-phospho-(deoxyribonucleotide)m = (deoxyribonucleotide)n+m + AMP + beta-nicotinamide D-nucleotide.. DNA ligase that catalyzes the formation of phosphodiester linkages between 5'-phosphoryl and 3'-hydroxyl groups in double-stranded DNA using NAD as a coenzyme and as the energy source for the reaction. It is essential for DNA replication and repair of damaged DNA. In Sulfurovum sp. (strain NBC37-1), this protein is DNA ligase.